The chain runs to 456 residues: uncharacterized protein (456 aa).

Residues 3–61 (LMRKNETREFLIEDIEFPAVGVAFYNDKKVYIKGAVPGQKVLARVSKVRREKIEAKLKE) enclose the TRAM domain. Positions 74, 80, 83, and 163 each coordinate [4Fe-4S] cluster. Residues Q289, Y318, E339, and D384 each contribute to the S-adenosyl-L-methionine site. C411 functions as the Nucleophile in the catalytic mechanism.

This sequence belongs to the class I-like SAM-binding methyltransferase superfamily. RNA M5U methyltransferase family.

This is an uncharacterized protein from Clostridium acetobutylicum (strain ATCC 824 / DSM 792 / JCM 1419 / IAM 19013 / LMG 5710 / NBRC 13948 / NRRL B-527 / VKM B-1787 / 2291 / W).